The following is a 1020-amino-acid chain: Sodium/potassium-transporting ATPase subunit alpha-2 (1020 aa).

Positions 1–5 (MGRGA) are excised as a propeptide. The tract at residues 1–31 (MGRGAGREYSPAATTAENGGGKKKQKEKELD) is disordered. Over 6-85 (GREYSPAATT…NALTPPPTTP (80 aa)) the chain is Cytoplasmic. A Phosphoserine modification is found at S10. Residues 80 to 82 (PPP) are interaction with phosphoinositide-3 kinase. The helical transmembrane segment at 86 to 106 (EWVKFCRQLFGGFSILLWIGA) threads the bilayer. Over 107-129 (ILCFLAYGIQAAMEDEPSNDNLY) the chain is Extracellular. Residues 130–150 (LGVVLAAVVIVTGCFSYYQEA) form a helical membrane-spanning segment. At 151–286 (KSSKIMDSFK…VGRTPIAMEI (136 aa)) the chain is on the cytoplasmic side. The segment covering 212–227 (DNSSLTGESEPQTRSP) has biased composition (polar residues). Residues 212-231 (DNSSLTGESEPQTRSPEFTH) form a disordered region. A helical membrane pass occupies residues 287–306 (EHFIQLITGVAVFLGVSFFV). The Extracellular segment spans residues 307-318 (LSLILGYSWLEA). Residues 319–336 (VIFLIGIIVANVPEGLLA) form a helical membrane-spanning segment. At 337–769 (TVTVCLTLTA…EEGRLIFDNL (433 aa)) the chain is on the cytoplasmic side. The active-site 4-aspartylphosphate intermediate is D374. A phosphoserine mark is found at S439, S450, and S559. At T570 the chain carries Phosphothreonine. Phosphoserine is present on residues S587 and S672. Mg(2+)-binding residues include D714 and D718. The helical transmembrane segment at 770 to 789 (KKSIAYTLTSNIPEITPFLL) threads the bilayer. Topologically, residues 790-799 (FIIANIPLPL) are extracellular. The chain crosses the membrane as a helical span at residues 800-820 (GTVTILCIDLGTDMVPAISLA). Topologically, residues 821–840 (YEAAESDIMKRQPRNPQTDK) are cytoplasmic. Phosphoserine is present on S826. Residues 841-863 (LVNERLISMAYGQIGMIQALGGF) form a helical membrane-spanning segment. Over 864–915 (FTYFVILAENGFLPSRLLGIRLDWDDRSMNDLEDSYGQEWTYEQRKVVEFTC) the chain is Extracellular. A helical membrane pass occupies residues 916–935 (HTAFFASIVVVQWADLIICK). Residues 936–948 (TRRNSVFQQGMKN) lie on the Cytoplasmic side of the membrane. A Phosphoserine; by PKA modification is found at S940. A helical transmembrane segment spans residues 949 to 967 (KILIFGLLEETALAAFLSY). At 968–982 (CPGMGVALRMYPLKV) the chain is on the extracellular side. Residues 983–1003 (TWWFCAFPYSLLIFIYDEVRK) traverse the membrane as a helical segment. The Cytoplasmic segment spans residues 1004–1020 (LILRRYPGGWVEKETYY).

Belongs to the cation transport ATPase (P-type) (TC 3.A.3) family. Type IIC subfamily. In terms of assembly, the sodium/potassium-transporting ATPase is composed of a catalytic alpha subunit, an auxiliary non-catalytic beta subunit and an additional regulatory subunit. Interacts with regulatory subunit FXYD1.

It is found in the membrane. Its subcellular location is the cell membrane. The catalysed reaction is K(+)(out) + Na(+)(in) + ATP + H2O = K(+)(in) + Na(+)(out) + ADP + phosphate + H(+). This is the catalytic component of the active enzyme, which catalyzes the hydrolysis of ATP coupled with the exchange of sodium and potassium ions across the plasma membrane. This action creates the electrochemical gradient of sodium and potassium, providing the energy for active transport of various nutrients. This chain is Sodium/potassium-transporting ATPase subunit alpha-2 (ATP1A2), found in Sus scrofa (Pig).